The chain runs to 273 residues: Homeobox protein HMX2 (273 aa).

The segment at 1 to 154 (MGSKEDVGKG…TGAAKKKTRT (154 aa)) is disordered. Residues 114-123 (PDFKEEKERL) are compositionally biased toward basic and acidic residues. Positions 149 to 208 (KKKTRTVFSRSQVYQLESTFDMKRYLSSSERACLASSLQLTETQVKTWFQNRRNKWKRQL) form a DNA-binding region, homeobox.

Belongs to the HMX homeobox family. In terms of tissue distribution, expressed in the developing CNS, including a specific expression in vestibular structures throughout inner ear development.

It is found in the nucleus. Its function is as follows. Transcription factor involved in specification of neuronal cell types and which is required for inner ear and hypothalamus development. The chain is Homeobox protein HMX2 (Hmx2) from Mus musculus (Mouse).